Reading from the N-terminus, the 528-residue chain is Extracellular serine/threonine protein CG31145 (528 aa).

Residues 1–12 (MAVLRTMKLKER) are Cytoplasmic-facing. Positions 1–76 (MAVLRTMKLK…LHEFKRKFLQ (76 aa)) are excised as a propeptide. The helical transmembrane segment at 13 to 33 (LVISLGATLVLLTLLLIVDVQ) threads the bilayer. Residues 34 to 528 (MDFGVANRHL…VDGSETDVSS (495 aa)) are Lumenal-facing. The disordered stretch occupies residues 77 to 130 (KSNASGSKEASTQAGASQSGGATSGQDAAAGASGGAAGPGTSRSTSTRKPTPHD). N-linked (GlcNAc...) asparagine glycosylation occurs at Asn79. The span at 86-107 (ASTQAGASQSGGATSGQDAAAG) shows a compositional bias: low complexity. A glycan (N-linked (GlcNAc...) asparagine) is linked at Asn173. ATP contacts are provided by Gln220, Lys236, and Glu257. A Mn(2+)-binding site is contributed by Glu257. The N-linked (GlcNAc...) asparagine glycan is linked to Asn286. Intrachain disulfides connect Cys312-Cys328 and Cys317-Cys321. 339-342 (AAFL) contacts ATP. 2 cysteine pairs are disulfide-bonded: Cys376-Cys450 and Cys451-Cys510. The active site involves Asp408. Glu413 lines the ATP pocket. A glycan (N-linked (GlcNAc...) asparagine) is linked at Asn420. Residue Asp428 participates in ATP binding. A Mn(2+)-binding site is contributed by Asp428.

This sequence belongs to the FAM20 family. Mn(2+) is required as a cofactor. In terms of tissue distribution, in embryos, prominently expressed in midline glia, salivary gland, intestine and dorsal vessel (heart). Not associated with biomineralization.

It localises to the golgi apparatus membrane. The protein localises to the secreted. It catalyses the reaction L-seryl-[protein] + ATP = O-phospho-L-seryl-[protein] + ADP + H(+). The catalysed reaction is L-threonyl-[protein] + ATP = O-phospho-L-threonyl-[protein] + ADP + H(+). Golgi serine/threonine protein kinase that phosphorylates secretory pathway proteins within Ser-x-Glu/pSer motifs. The polypeptide is Extracellular serine/threonine protein CG31145 (Drosophila melanogaster (Fruit fly)).